A 393-amino-acid polypeptide reads, in one-letter code: Bifunctional chrysanthemol synthase, chloroplastic (393 aa).

Low complexity predominate over residues 1-18; that stretch reads MACSSSLSSKWASWGASS. The interval 1–22 is disordered; that stretch reads MACSSSLSSKWASWGASSRPHP. Residues 1-53 constitute a chloroplast transit peptide; it reads MACSSSLSSKWASWGASSRPHPSVQPFVTRKNVVRYHKPTSELSYSPLTTTLS. The dimethylallyl diphosphate site is built by Lys99, Arg102, and Gln137. Mg(2+)-binding residues include Asp144 and Asp148. Arg153, Arg154, Lys241, Gln280, Asp287, Lys297, and Lys306 together coordinate dimethylallyl diphosphate.

It belongs to the FPP/GGPP synthase family. Requires Mg(2+) as cofactor. In terms of tissue distribution, restricted to glandular trichomes during achene maturation. Expressed in flowers and in both ray and disk florets.

It localises to the plastid. It is found in the chloroplast. It catalyses the reaction 2 dimethylallyl diphosphate = (R,R)-chrysanthemyl diphosphate + diphosphate. It carries out the reaction (R,R)-chrysanthemyl diphosphate + H2O = (R,R)-chrysanthemol + diphosphate. The catalysed reaction is (R)-lavandulyl diphosphate + H2O = (R)-lavandulol + diphosphate. The protein operates within isoprenoid biosynthesis. In terms of biological role, component of the monoterpenoid pyrethrins biosynthesis; pyrethrins are widely used plant-derived pesticide. Catalyzes the condensation of two molecules of dimethylallyl diphosphate to produce chrysanthemyl diphosphate (CPP), a monoterpene with a non-head-to-tail or irregular c1'-2-3 linkage between isoprenoid units. In a second step, hydrolyzes the diphosphate moiety of CPP to form chrysanthemol. With a lower efficiency, can also converts dimethylallyl diphosphate into lavandulyl diphosphate (LPP), and subsequently LPP into lavandulol. In Tanacetum cinerariifolium (Dalmatian daisy), this protein is Bifunctional chrysanthemol synthase, chloroplastic.